The following is a 361-amino-acid chain: Rhomboid domain-containing protein 2 (361 aa).

5 helical membrane passes run 19-39, 63-83, 100-120, 158-178, and 182-202; these read SATFFTALLSLLVSGPRLFLL, LVTYIFVYENPVSLLCGAIII, CFFTLIFTVFSAIIYLSFESV, FGVVVPSVLVPWLLLCASWLI, and SFLSNVSGLLIGLSYGLTYCY. 2 disordered regions span residues 265–287 and 318–361; these read PSYPVTQMQHASGQKLASWPPGH and PASA…VAMP. Composition is skewed to polar residues over residues 267–276 and 318–328; these read YPVTQMQHAS and PASAGTSQGVQ.

This sequence belongs to the peptidase S54 family. In terms of assembly, might form homotrimers; these trimers are only formed in retina. In terms of tissue distribution, widely expressed, including in retina and brain (at protein level), as well as in kidney, testis and ovary. Expressed in all layers of the retina, including inner segments of photoreceptor cells and ganglion cells (at protein level).

It is found in the golgi apparatus. It localises to the cis-Golgi network membrane. The polypeptide is Rhomboid domain-containing protein 2 (Rhbdd2) (Mus musculus (Mouse)).